Here is a 1004-residue protein sequence, read N- to C-terminus: Centriolar coiled-coil protein of 110 kDa (1004 aa).

Residues 1 to 221 (MEEYEEFCEK…SCLAEVTPDP (221 aa)) are CEP97 binding. The stretch at 51 to 90 (EKRKKIQEEKQKALDVQSRKQANRKKALLTRVQEILENVQ) forms a coiled coil. The calmodulin-binding stretch occupies residues 64–82 (LDVQSRKQANRKKALLTRV). A required for interaction with CEP290 region spans residues 67 to 82 (QSRKQANRKKALLTRV). Disordered regions lie at residues 147-194 (PVNN…SSAS) and 239-279 (RELS…APPM). The residue at position 170 (Ser-170) is a Phosphoserine. Residues 243–252 (SRSLRNSLKR) show a composition bias toward low complexity. The segment covering 253 to 276 (SVNETHSDRENDAAKASDCVKEKA) has biased composition (basic and acidic residues). The segment at 349 to 564 (ENKVKSLKGP…QTQTSRQQMD (216 aa)) is interaction with CEP76. A phosphoserine mark is found at Ser-364, Ser-370, and Ser-398. Positions 401–433 (GKEEAVDRTAPAAAETTNESETVPKSPTDLTGV) are disordered. Residues 415–433 (ETTNESETVPKSPTDLTGV) are compositionally biased toward polar residues. Ser-550 bears the Phosphoserine mark. Positions 641–699 (QELLKSKMLAFEEMRKRLEEQHAQQLSLLIAEQEREQEQLQKEIEEQEKMLKEKAVTTD) form a coiled coil. Calmodulin-binding stretches follow at residues 773-813 (GRAQ…DKLK) and 901-916 (VALS…RKKF). The disordered stretch occupies residues 955–1004 (LSRQGTPKTSVKGVVQNRQKPSQSRVPNRAPVSGAYAGKTQRKRPNVATI). Residues 970–980 (QNRQKPSQSRV) show a composition bias toward polar residues. Over residues 994-1004 (TQRKRPNVATI) the composition is skewed to basic residues.

As to quaternary structure, interacts with CALM1, CETN2, CEP76, CEP104, CEP290 and TALPID3. Interacts with CEP97. Seems to associate with discrete CETN2, CEP97 and CEP290-containing complexes. Interacts with NEURL4 and CCNF; these interactions are not mutually exclusive and both lead to CCP110 ubiquitination and proteasome-dependent degradation. Via its interaction with NEURL4, may indirectly interact with HERC2. Interacts with KIF24, leading to its recruitment to centrioles. Interacts with USP20 and USP33. Interacts with MPHOSPH9. Interacts (via N-terminal region) with ENKD1 (via central region); ENKD1 competes with CEP97 for binding to CCP110, destabilizing the interaction between CP110 and CEP97 which promotes the removal of CCP110 and CEP97 from the mother centriole and allows the initiation of ciliogenesis. In terms of processing, phosphorylated by CDKs. Post-translationally, ubiquitinated by the SCF(CCNF) during G2 phase, leading to its degradation by the proteasome and preventing centrosome reduplication. Deubiquitinated by USP33 in S and G2/M phase, leading to stabilize CCP110 during the period which centrioles duplicate and elongate. Ubiquitinated by the EDVP complex, leading to its degradation.

Its subcellular location is the cytoplasm. It is found in the cytoskeleton. It localises to the microtubule organizing center. The protein localises to the centrosome. The protein resides in the centriole. Its subcellular location is the cilium basal body. Functionally, necessary for centrosome duplication at different stages of procentriole formation. Acts as a key negative regulator of ciliogenesis in collaboration with CEP97 by capping the mother centriole thereby preventing cilia formation. Also involved in promoting ciliogenesis. May play a role in the assembly of the mother centriole subdistal appendages (SDA) thereby effecting the fusion of recycling endosomes to basal bodies during cilia formation. Required for correct spindle formation and has a role in regulating cytokinesis and genome stability via cooperation with CALM1 and CETN2. The sequence is that of Centriolar coiled-coil protein of 110 kDa (Ccp110) from Mus musculus (Mouse).